The sequence spans 1464 residues: Collagen alpha-1(I) chain (1464 aa).

An N-terminal signal peptide occupies residues 1 to 22; the sequence is MFSFVDLRLLLLLAATALLTHG. The propeptide at 23–161 is N-terminal propeptide; that stretch reads QEEGQVEGQD…PPGLGGNFAP (139 aa). A VWFC domain is found at 38–96; sequence ITCVQNGLRYHDRDVWKPEPCRICVCDNGKVLCDDVICDETKNCPGAEVPEGECCPVCP. The disordered stretch occupies residues 98–1214; sequence GSESPTDQET…PQEKAHDGGR (1117 aa). Residues 138–153 are compositionally biased toward pro residues; it reads PGLPGPPGPPGPPGPP. Gln-162 carries the pyrrolidone carboxylic acid modification. The interval 162–178 is nonhelical region (N-terminal); the sequence is QLSYGYDEKSTGGISVP. At Lys-170 the chain carries Allysine. Ser-171 is subject to Phosphoserine. Residues 179–1192 form a triple-helical region region; it reads GPMGPSGPRG…PGPPGPPGPP (1014 aa). A 4-hydroxyproline mark is found at Pro-190, Pro-193, Pro-196, Pro-205, Pro-208, Pro-211, Pro-226, Pro-241, Pro-247, Pro-256, and Pro-262. The segment covering 198 to 217 has biased composition (low complexity); that stretch reads PQGFQGPPGEPGEPGASGPM. The span at 229–243 shows a compositional bias: basic and acidic residues; it reads NGDDGEAGKPGRPGE. 5-hydroxylysine; alternate is present on Lys-265. A glycan (O-linked (Gal...) hydroxylysine; alternate) is linked at Lys-265. Ser-271 bears the Phosphoserine mark. Residues 279 to 295 show a composition bias toward low complexity; sequence DAGPAGPKGEPGSPGEN. A 4-hydroxyproline mark is found at Pro-289, Pro-292, Pro-298, Pro-307, and Pro-313. Residues 318 to 331 are compositionally biased toward low complexity; that stretch reads PAGARGNDGATGAA. Residues 333–345 show a composition bias toward pro residues; it reads PPGPTGPAGPPGF. 4-hydroxyproline occurs at positions 334, 343, 346, 373, 376, 388, 394, 403, 409, 412, and 427. The segment covering 379-418 has biased composition (low complexity); the sequence is AGAAGPAGNPGADGQPGAKGANGAPGIAGAPGFPGARGPS. A 5-hydroxylysine modification is found at Lys-430. 4-hydroxyproline occurs at positions 436, 439, 451, 460, 475, 481, 490, and 496. The span at 448-457 shows a compositional bias: low complexity; it reads KGEPGPVGVQ. Over residues 485 to 494 the composition is skewed to gly residues; it reads GERGGPGSRG. Lys-505 is modified (5-hydroxylysine). A 4-hydroxyproline mark is found at Pro-514, Pro-523, Pro-529, Pro-535, Pro-544, Pro-547, Pro-556, Pro-565, Pro-571, Pro-583, Pro-592, Pro-601, Pro-604, Pro-622, Pro-640, Pro-646, Pro-652, Pro-658, Pro-664, Pro-670, Pro-682, Pro-691, Pro-703, Pro-715, Pro-718, Pro-724, Pro-730, and Pro-739. The span at 538–564 shows a compositional bias: low complexity; sequence KGLTGSPGSPGPDGKTGPPGPAGQDGR. The span at 573–592 shows a compositional bias: low complexity; it reads ARGQAGVMGFPGPKGAAGEP. Low complexity predominate over residues 634–661; that stretch reads QGPAGSPGFQGLPGPAGPPGEAGKPGEQ. Low complexity predominate over residues 696-724; sequence PRGANGAPGNDGAKGDAGAPGAPGSQGAP. The short motif at 745 to 747 is the Cell attachment site element; the sequence is RGD. The residue at position 751 (Lys-751) is a 5-hydroxylysine. 4-hydroxyproline is present on residues Pro-757, Pro-772, and Pro-778. Over residues 784–798 the composition is skewed to low complexity; sequence SGPSGPAGPTGARGA. At Ser-787 the chain carries Phosphoserine. Residues Pro-799, Pro-805, Pro-808, Pro-817, Pro-823, Pro-841, Pro-850, and Pro-859 each carry the 4-hydroxyproline modification. Residues 811 to 838 are compositionally biased toward low complexity; it reads AGFAGPPGADGQPGAKGEPGDAGAKGDA. Positions 840–852 are enriched in pro residues; sequence PPGPAGPAGPPGP. Low complexity predominate over residues 853-883; that stretch reads IGNVGAPGAKGARGSAGPPGATGFPGAAGRV. A 5-hydroxylysine modification is found at Lys-862. 4-hydroxyproline is present on residues Pro-871 and Pro-877. The residue at position 885 (Pro-885) is a 3-hydroxyproline. Pro-886, Pro-895, Pro-898, Pro-919, Pro-928, Pro-937, Pro-946, Pro-964, Pro-973, Pro-976, Pro-982, Pro-997, Pro-1003, Pro-1009, Pro-1018, and Pro-1024 each carry 4-hydroxyproline. A compositionally biased stretch (low complexity) spans 912-921; the sequence is ETGPAGRPGE. The span at 931-955 shows a compositional bias: low complexity; it reads AGEKGSPGADGPAGAPGTPGPQGIA. Over residues 996–1006 the composition is skewed to pro residues; the sequence is PPGPMGPPGLA. Lys-1033 is modified (5-hydroxylysine). The span at 1042 to 1057 shows a compositional bias: pro residues; that stretch reads AGPPGAPGAPGAPGPV. A 4-hydroxyproline mark is found at Pro-1045, Pro-1048, and Pro-1051. The span at 1078-1092 shows a compositional bias: low complexity; the sequence is VGPVGARGPAGPQGP. The Cell attachment site signature appears at 1093–1095; it reads RGD. Over residues 1093-1107 the composition is skewed to basic and acidic residues; it reads RGDKGETGEQGDRGI. Residue Lys-1096 is modified to 5-hydroxylysine. The residue at position 1108 (Lys-1108) is a 5-hydroxylysine; alternate. Lys-1108 is a glycosylation site (O-linked (Gal...) hydroxylysine; alternate). A 4-hydroxyproline mark is found at Pro-1120, Pro-1123, Pro-1126, Pro-1144, and Pro-1159. Residues 1126 to 1159 are compositionally biased toward low complexity; sequence PGEQGPSGASGPAGPRGPPGSAGAPGKDGLNGLP. Pro-1164 is modified (3-hydroxyproline). A 4-hydroxyproline modification is found at Pro-1165. Over residues 1177 to 1192 the composition is skewed to pro residues; that stretch reads VGPPGPPGPPGPPGPP. The residue at position 1179 (Pro-1179) is a 3-hydroxyproline. Pro-1180 is modified (4-hydroxyproline). Pro-1182 carries the 3-hydroxyproline modification. A 4-hydroxyproline modification is found at Pro-1183. The residue at position 1185 (Pro-1185) is a 3-hydroxyproline. 4-hydroxyproline is present on residues Pro-1186, Pro-1189, and Pro-1192. The tract at residues 1193-1218 is nonhelical region (C-terminal); sequence SAGFDFSFLPQPPQEKAHDGGRYYRA. Allysine is present on Lys-1208. The propeptide at 1219–1464 is C-terminal propeptide; the sequence is DDANVVRDRD…GFDVGPVCFL (246 aa). A Fibrillar collagen NC1 domain is found at 1229–1464; sequence LEVDTTLKSL…GFDVGPVCFL (236 aa). Intrachain disulfides connect Cys-1259–Cys-1291, Cys-1299–Cys-1462, and Cys-1370–Cys-1415. The Ca(2+) site is built by Asp-1277, Asn-1279, Gln-1280, Cys-1282, and Asp-1285. Asn-1365 carries an N-linked (GlcNAc...) asparagine glycan.

It belongs to the fibrillar collagen family. Trimers of one alpha 2(I) and two alpha 1(I) chains. Interacts with MRC2. Interacts with TRAM2. Interacts with MFAP4 in a Ca (2+)-dependent manner. In terms of processing, contains mostly 4-hydroxyproline. Proline residues at the third position of the tripeptide repeating unit (G-X-Y) are hydroxylated in some or all of the chains. Contains 3-hydroxyproline at a few sites. This modification occurs on the first proline residue in the sequence motif Gly-Pro-Hyp, where Hyp is 4-hydroxyproline. Post-translationally, lysine residues at the third position of the tripeptide repeating unit (G-X-Y) are 5-hydroxylated in some or all of the chains. In terms of processing, O-glycosylated on hydroxylated lysine residues. The O-linked glycan consists of a Glc-Gal disaccharide. Forms the fibrils of tendon, ligaments and bones. In bones the fibrils are mineralized with calcium hydroxyapatite.

It is found in the secreted. It localises to the extracellular space. The protein resides in the extracellular matrix. Functionally, type I collagen is a member of group I collagen (fibrillar forming collagen). This chain is Collagen alpha-1(I) chain (COL1A1), found in Homo sapiens (Human).